The sequence spans 178 residues: MAEKITIARPYANAVFELAQAQKNYDQWSRVLNVFADLARDSEMQILIDDPRYTSEQLIGLFVEIGGDTVTESAKNFIKILADNRRLSVLPEVAALFEQLRAEIEGTLEVEIISAKPLAEEQLNEIASALKRRLGREVTFSRKTDESLLGGVIIRAGDLVIDGSAIGKLNQLAASLLH.

Belongs to the ATPase delta chain family. In terms of assembly, F-type ATPases have 2 components, F(1) - the catalytic core - and F(0) - the membrane proton channel. F(1) has five subunits: alpha(3), beta(3), gamma(1), delta(1), epsilon(1). F(0) has three main subunits: a(1), b(2) and c(10-14). The alpha and beta chains form an alternating ring which encloses part of the gamma chain. F(1) is attached to F(0) by a central stalk formed by the gamma and epsilon chains, while a peripheral stalk is formed by the delta and b chains.

It localises to the cell inner membrane. Its function is as follows. F(1)F(0) ATP synthase produces ATP from ADP in the presence of a proton or sodium gradient. F-type ATPases consist of two structural domains, F(1) containing the extramembraneous catalytic core and F(0) containing the membrane proton channel, linked together by a central stalk and a peripheral stalk. During catalysis, ATP synthesis in the catalytic domain of F(1) is coupled via a rotary mechanism of the central stalk subunits to proton translocation. In terms of biological role, this protein is part of the stalk that links CF(0) to CF(1). It either transmits conformational changes from CF(0) to CF(1) or is implicated in proton conduction. The sequence is that of ATP synthase subunit delta from Nitrosococcus oceani (strain ATCC 19707 / BCRC 17464 / JCM 30415 / NCIMB 11848 / C-107).